We begin with the raw amino-acid sequence, 665 residues long: Translation factor GUF1 homolog, mitochondrial (665 aa).

The N-terminal 35 residues, 1–35, are a transit peptide targeting the mitochondrion; sequence MAGAAVLRRSARRIYRHLAAAPAFSRSVLQQPKRL. Positions 34-53 are disordered; that stretch reads RLLSSQSSPEHGARGAVSGS. The tr-type G domain occupies 61–249; that stretch reads ERVRNFSIIA…AVIERIPSPP (189 aa). GTP contacts are provided by residues 70–77, 142–146, and 196–199; these read AHVDHGKS, DTPGH, and NKID.

Belongs to the TRAFAC class translation factor GTPase superfamily. Classic translation factor GTPase family. LepA subfamily.

The protein resides in the mitochondrion inner membrane. It catalyses the reaction GTP + H2O = GDP + phosphate + H(+). Functionally, promotes mitochondrial protein synthesis. May act as a fidelity factor of the translation reaction, by catalyzing a one-codon backward translocation of tRNAs on improperly translocated ribosomes. Binds to mitochondrial ribosomes in a GTP-dependent manner. In Sorghum bicolor (Sorghum), this protein is Translation factor GUF1 homolog, mitochondrial.